The chain runs to 210 residues: Cytochrome c oxidase subunit 2 (210 aa).

The Mitochondrial intermembrane segment spans residues 1–20 (MAFILSFWMIFLLDSVIVLL). Residues 21–42 (SFVCFVCVWICALLFSTVLLVS) form a helical membrane-spanning segment. Residues 43–60 (KLNNIYCTWDFTASKFID) are Mitochondrial matrix-facing. The chain crosses the membrane as a helical span at residues 61 to 86 (VYWFTIGGMFSLGLLLRLCLLLYFGH). The Mitochondrial intermembrane portion of the chain corresponds to 87-210 (LNFVSFDLCK…GFMPIVICFI (124 aa)). The Cu cation site is built by histidine 157, cysteine 192, glutamate 194, cysteine 196, histidine 200, and methionine 203. Mg(2+) is bound at residue glutamate 194.

This sequence belongs to the cytochrome c oxidase subunit 2 family. In terms of assembly, component of the cytochrome c oxidase (complex IV, CIV), a multisubunit enzyme composed of a catalytic core of 3 subunits and several supernumerary subunits. The complex exists as a monomer or a dimer and forms supercomplexes (SCs) in the inner mitochondrial membrane with ubiquinol-cytochrome c oxidoreductase (cytochrome b-c1 complex, complex III, CIII). It depends on Cu cation as a cofactor.

It localises to the mitochondrion inner membrane. The catalysed reaction is 4 Fe(II)-[cytochrome c] + O2 + 8 H(+)(in) = 4 Fe(III)-[cytochrome c] + 2 H2O + 4 H(+)(out). In terms of biological role, component of the cytochrome c oxidase, the last enzyme in the mitochondrial electron transport chain which drives oxidative phosphorylation. The respiratory chain contains 3 multisubunit complexes succinate dehydrogenase (complex II, CII), ubiquinol-cytochrome c oxidoreductase (cytochrome b-c1 complex, complex III, CIII) and cytochrome c oxidase (complex IV, CIV), that cooperate to transfer electrons derived from NADH and succinate to molecular oxygen, creating an electrochemical gradient over the inner membrane that drives transmembrane transport and the ATP synthase. Cytochrome c oxidase is the component of the respiratory chain that catalyzes the reduction of oxygen to water. Electrons originating from reduced cytochrome c in the intermembrane space (IMS) are transferred via the dinuclear copper A center (CU(A)) of subunit 2 and heme A of subunit 1 to the active site in subunit 1, a binuclear center (BNC) formed by heme A3 and copper B (CU(B)). The BNC reduces molecular oxygen to 2 water molecules using 4 electrons from cytochrome c in the IMS and 4 protons from the mitochondrial matrix. The chain is Cytochrome c oxidase subunit 2 from Leishmania tarentolae (Sauroleishmania tarentolae).